A 469-amino-acid polypeptide reads, in one-letter code: Dynein axonemal assembly factor 11 (469 aa).

4 LRR repeats span residues 20 to 43, 44 to 65, 66 to 89, and 90 to 110; these read IFSLEEISLHQQDLERIEHIDKWC, RELKILYLQNNLIGKIENVSKL, KKLEYLNLALNNIEKIENLEGCES, and LQKLDLTVNFVGELSSINSLQ. The region spanning 114 to 135 is the LRRCT domain; sequence HLRELYLVGNPCAEYEGYRQYV. 2 stretches are compositionally biased toward basic and acidic residues: residues 179-213 and 261-286; these read KRAAEREEARSKLQGKQKESRKTQEKKPGFDRRWY and SRLETHRYLEEKRKSKESSSEGELKK. 2 disordered regions span residues 179–290 and 436–469; these read KRAA…KPPR and KTQAQGPLQFHKNKVKDTEDSEDFIDNTDVPPLM.

Belongs to the tilB family.

Its subcellular location is the cytoplasm. It localises to the cell projection. It is found in the cilium. The protein localises to the dynein axonemal particle. The protein resides in the flagellum. In terms of biological role, involved in dynein arm assembly, is important for expression and transporting outer dynein arm (ODA) proteins from the cytoplasm to the cilia. In Xenopus laevis (African clawed frog), this protein is Dynein axonemal assembly factor 11 (dnaaf11).